Reading from the N-terminus, the 78-residue chain is D-alanyl carrier protein (78 aa).

In terms of domain architecture, Carrier spans 1–77 (MAVKEEVVEI…KVIAKVESLI (77 aa)). Position 35 is an O-(pantetheine 4'-phosphoryl)serine (Ser35).

It belongs to the DltC family. In terms of processing, 4'-phosphopantetheine is transferred from CoA to a specific serine of apo-DCP.

Its subcellular location is the cytoplasm. The protein operates within cell wall biogenesis; lipoteichoic acid biosynthesis. Carrier protein involved in the D-alanylation of lipoteichoic acid (LTA). The loading of thioester-linked D-alanine onto DltC is catalyzed by D-alanine--D-alanyl carrier protein ligase DltA. The DltC-carried D-alanyl group is further transferred to cell membrane phosphatidylglycerol (PG) by forming an ester bond, probably catalyzed by DltD. D-alanylation of LTA plays an important role in modulating the properties of the cell wall in Gram-positive bacteria, influencing the net charge of the cell wall. The sequence is that of D-alanyl carrier protein from Leuconostoc citreum (strain KM20).